The following is a 312-amino-acid chain: Zinc-finger homeodomain protein 4 (312 aa).

Positions 20-74 are disordered; that stretch reads GGGGSHGHMIHHHDHHAANSAPPTHNNNNTTQPPPMPLHGNGHGNNYDHHHHQDP. Residues 37–50 show a composition bias toward low complexity; that stretch reads ANSAPPTHNNNNTT. The segment at 90–139 adopts a ZF-HD dimerization-type; degenerate zinc-finger fold; it reads YKECLKNHAAAMGGNATDGCGEFMPSGEDGSIEALTCSACNCHRNFHRKE. Positions 218–281 form a DNA-binding region, homeobox; sequence KKRFRTKFTP…NNKIHFSKKN (64 aa).

In terms of assembly, homo- and heterodimer with other ZFHD proteins. Interacts with ZHD1, ZHD2, ZHD5, ZHD7, ZHD8, ZHD10 and ZHD11. In terms of tissue distribution, mostly expressed in flowers and inflorescence.

The protein localises to the nucleus. In terms of biological role, putative transcription factor. Probably involved in the regulation of floral induction. In Arabidopsis thaliana (Mouse-ear cress), this protein is Zinc-finger homeodomain protein 4 (ZHD4).